The sequence spans 289 residues: MADNIQRGEEFEKKAEKKISGWGLFGSKYEDAADFYDKAANCFKLAKSWDRAGSTYVKLSTVIQSSDSKHEAAQAYADAGHCYKKTSAKEAISCLEQAAYLFLDNGRFNMAGKYYKEIAELYELEQNFEQAIIYFEKAADIYQSEEATTAANQCNAKVAQFAAQLEQYQKAIQIYEDIGRPSLNNNLLKYGVKGHLLNAGICQLCKGDVVAITNALDRYQEMDPTFSGTREYKLLVDLAAAVDEEDVVKFTDAVKEFDSMTQLDAWKTTLLLRVKEAIKAKELEEDDLT.

A TPR repeat occupies 112–145 (GKYYKEIAELYELEQNFEQAIIYFEKAADIYQSE).

Belongs to the SNAP family.

It is found in the membrane. Functionally, required for vesicular transport between the endoplasmic reticulum and the Golgi apparatus. The polypeptide is Alpha-soluble NSF attachment protein (Vitis vinifera (Grape)).